A 110-amino-acid chain; its full sequence is Progonadoliberin-2 (110 aa).

Positions M1–A26 are cleaved as a signal peptide. Positions K25 to V85 are disordered. G36 carries the post-translational modification Glycine amide.

Belongs to the GnRH family. In terms of tissue distribution, midbrain.

It localises to the secreted. Stimulates the secretion of gonadotropins; it stimulates the secretion of both luteinizing and follicle-stimulating hormones. The sequence is that of Progonadoliberin-2 (GNRH2) from Suncus murinus (Asian house shrew).